A 255-amino-acid chain; its full sequence is Flagellar brake protein YcgR (255 aa).

The PilZ domain occupies 122–240 (QRRTYFRINT…ERDLQQVIFE (119 aa)).

This sequence belongs to the YcgR family. As to quaternary structure, monomer. Interacts with the flagellar basal bodies.

It is found in the bacterial flagellum basal body. In terms of biological role, acts as a flagellar brake, regulating swimming and swarming in a bis-(3'-5') cyclic diguanylic acid (c-di-GMP)-dependent manner. Binds 1 c-di-GMP dimer per subunit. Increasing levels of c-di-GMP lead to decreased motility. The polypeptide is Flagellar brake protein YcgR (Pectobacterium carotovorum subsp. carotovorum (strain PC1)).